Here is a 478-residue protein sequence, read N- to C-terminus: Lysosome membrane protein 2 (478 aa).

Over 1-4 (MGRC) the chain is Cytoplasmic. A helical transmembrane segment spans residues 5–27 (CFYTAGTLSLLLLVTSVTLLVAR). The Lumenal portion of the chain corresponds to 28–433 (VFQKAVDQSI…RLKSMINTTL (406 aa)). Asparagine 45, asparagine 68, and asparagine 105 each carry an N-linked (GlcNAc...) asparagine glycan. An important for interaction with GBA1 region spans residues 155–191 (IIEAMLKAYQQKLFVTHTVDELLWGYKDEILSLIHVF). Asparagine 206, asparagine 224, asparagine 249, and asparagine 304 each carry an N-linked (GlcNAc...) asparagine glycan. Disulfide bonds link cysteine 274-cysteine 329 and cysteine 312-cysteine 318. N-linked (GlcNAc...) asparagine glycans are attached at residues asparagine 325, asparagine 412, and asparagine 430. The helical transmembrane segment at 434–459 (IITNIPYIIMALGVFFGLVFTWLACK) threads the bilayer. Residues 460-478 (GQGSMDEGTADERAPLIRT) are Cytoplasmic-facing.

This sequence belongs to the CD36 family. As to quaternary structure, interacts with GBA1. In terms of assembly, (Microbial infection) Interacts with enterovirus 71 capsid proteins VP1 and VP2.

The protein localises to the lysosome membrane. In terms of biological role, acts as a lysosomal receptor for glucosylceramidase (GBA1) targeting. Functionally, (Microbial infection) Acts as a receptor for enterovirus 71. The protein is Lysosome membrane protein 2 (SCARB2) of Homo sapiens (Human).